We begin with the raw amino-acid sequence, 1400 residues long: DNA-directed RNA polymerase subunit beta' (1400 aa).

The Zn(2+) site is built by Cys70, Cys72, Cys85, and Cys88. The Mg(2+) site is built by Asp460, Asp462, and Asp464. Zn(2+)-binding residues include Cys814, Cys888, Cys895, and Cys898.

This sequence belongs to the RNA polymerase beta' chain family. As to quaternary structure, the RNAP catalytic core consists of 2 alpha, 1 beta, 1 beta' and 1 omega subunit. When a sigma factor is associated with the core the holoenzyme is formed, which can initiate transcription. Mg(2+) serves as cofactor. Zn(2+) is required as a cofactor.

It catalyses the reaction RNA(n) + a ribonucleoside 5'-triphosphate = RNA(n+1) + diphosphate. In terms of biological role, DNA-dependent RNA polymerase catalyzes the transcription of DNA into RNA using the four ribonucleoside triphosphates as substrates. The chain is DNA-directed RNA polymerase subunit beta' from Methylococcus capsulatus (strain ATCC 33009 / NCIMB 11132 / Bath).